The following is a 256-amino-acid chain: Protein FixA (256 aa).

It belongs to the ETF beta-subunit/FixA family. As to quaternary structure, heterodimer of FixA and FixB.

The protein operates within amine and polyamine metabolism; carnitine metabolism. Required for anaerobic carnitine reduction. May bring reductant to CaiA. The sequence is that of Protein FixA from Salmonella agona (strain SL483).